Consider the following 169-residue polypeptide: Actin-related protein 2/3 complex subunit 4 (169 aa).

It belongs to the ARPC4 family. As to quaternary structure, component of the Arp2/3 complex composed of arpB/Arp2, arpC/Arp3, arcA/p41-arc, arcB/p34-arc, arcC/p21-arc, arcD/p20-arc and arcE/p16-arc. Interacts with carmil (via the region between the LRR domain and COOH-terminal proline-rich domain); carmil is required for Arp2/3-dependent actin nucleation. Arp2/3 complex, MyoB, MyoC, and the alpha and beta subunits of capping protein all form a larger complex with carmil.

The protein localises to the cytoplasm. The protein resides in the cytoskeleton. Its subcellular location is the cytosol. It localises to the cell cortex. It is found in the cell projection. The protein localises to the pseudopodium. Functionally, functions as a component of the Arp2/3 complex which is involved in regulation of actin polymerization and together with an activating nucleation-promoting factor (NPF) mediates the formation of branched actin networks. Seems to contact the pointed end of the daughter actin filament. The Arp2/3 complex is involved in organizing the actin system in cell motility and chemotaxis, in phagocytosis and macropinocytosis, at late steps of endosome processing, and in mitosis. In concert with a group of other proteins, the Arp2/3 complex plays a general role in the rapid activation and adaptation of the actin system to its multiple functions. The chain is Actin-related protein 2/3 complex subunit 4 (arcD) from Dictyostelium discoideum (Social amoeba).